The sequence spans 1291 residues: Cytoplasmic FMR1-interacting protein (1291 aa).

The disordered stretch occupies residues 1270–1291; that stretch reads PSVISSSSHYQDPQKLRQSINN. Over residues 1271–1291 the composition is skewed to polar residues; sequence SVISSSSHYQDPQKLRQSINN.

This sequence belongs to the CYFIP family. As to quaternary structure, interacts with Fmr1 and Rac1. Component of the WAVE complex composed of Hem/Kette, Scar/Wave and Cyfip where it binds through its C-terminus directly to Hem. In terms of tissue distribution, in the embryo, expressed mainly in the gut and in the developing central nervous system where high levels of expression are found in the CNS neuropile. Expression in the gut diminishes as development proceeds (at protein level). In the adult, expressed specifically in the nervous system.

Its subcellular location is the cytoplasm. Functionally, plays a role in guidance and morphology of central and peripheral axons and in synaptic morphology. Also required for formation of cell membrane protrusions and for bristle development. Plays a role in regulating mitochondrial activity, energy metabolism and membrane potential which maintains normal gamma-aminobutyric acid (GABA) signaling and ensures normal social behavior. This chain is Cytoplasmic FMR1-interacting protein, found in Drosophila melanogaster (Fruit fly).